Here is a 305-residue protein sequence, read N- to C-terminus: Homoserine O-acetyltransferase (305 aa).

Catalysis depends on Cys142, which acts as the Acyl-thioester intermediate. Substrate is bound by residues Lys163 and Ser192. His235 (proton acceptor) is an active-site residue. The active site involves Glu237. Substrate is bound at residue Arg249.

The protein belongs to the MetA family.

The protein localises to the cytoplasm. It catalyses the reaction L-homoserine + acetyl-CoA = O-acetyl-L-homoserine + CoA. It participates in amino-acid biosynthesis; L-methionine biosynthesis via de novo pathway; O-acetyl-L-homoserine from L-homoserine: step 1/1. Its function is as follows. Transfers an acetyl group from acetyl-CoA to L-homoserine, forming acetyl-L-homoserine. This is Homoserine O-acetyltransferase from Dinoroseobacter shibae (strain DSM 16493 / NCIMB 14021 / DFL 12).